Here is a 637-residue protein sequence, read N- to C-terminus: Chaperone protein HtpG (637 aa).

Residues 1-345 (MSQQETHGFQ…SNDLPLNVSR (345 aa)) form an a; substrate-binding region. The b stretch occupies residues 346–562 (EILQDNHVTK…DGEMSTQMIK (217 aa)). The segment at 563-637 (LMQAAGQPVP…MNQMLLANMK (75 aa)) is c.

Belongs to the heat shock protein 90 family. Homodimer.

Its subcellular location is the cytoplasm. In terms of biological role, molecular chaperone. Has ATPase activity. This Shewanella baltica (strain OS155 / ATCC BAA-1091) protein is Chaperone protein HtpG.